The primary structure comprises 385 residues: 1-deoxy-D-xylulose 5-phosphate reductoisomerase (385 aa).

6 residues coordinate NADPH: T13, G14, S15, I16, N40, and N122. K123 provides a ligand contact to 1-deoxy-D-xylulose 5-phosphate. Residue E124 coordinates NADPH. Mn(2+) is bound at residue D148. 1-deoxy-D-xylulose 5-phosphate is bound by residues S149, E150, S177, and H200. Residue E150 coordinates Mn(2+). Residue G206 coordinates NADPH. S213, N218, K219, and E222 together coordinate 1-deoxy-D-xylulose 5-phosphate. Residue E222 coordinates Mn(2+).

The protein belongs to the DXR family. Mg(2+) is required as a cofactor. Requires Mn(2+) as cofactor.

The catalysed reaction is 2-C-methyl-D-erythritol 4-phosphate + NADP(+) = 1-deoxy-D-xylulose 5-phosphate + NADPH + H(+). It participates in isoprenoid biosynthesis; isopentenyl diphosphate biosynthesis via DXP pathway; isopentenyl diphosphate from 1-deoxy-D-xylulose 5-phosphate: step 1/6. Functionally, catalyzes the NADPH-dependent rearrangement and reduction of 1-deoxy-D-xylulose-5-phosphate (DXP) to 2-C-methyl-D-erythritol 4-phosphate (MEP). This chain is 1-deoxy-D-xylulose 5-phosphate reductoisomerase, found in Francisella tularensis subsp. novicida (strain U112).